We begin with the raw amino-acid sequence, 22 residues long: GLSRSCFGVKLDRIGSMSGLGC.

The cysteines at positions 6 and 22 are disulfide-linked.

This sequence belongs to the natriuretic peptide family.

The protein resides in the secreted. Its function is as follows. Hormone which plays a role in endochondral ossification through regulation of cartilaginous growth plate chondrocytes proliferation and differentiation. May also be vasoactive and natriuretic. Specifically binds and stimulates the cGMP production of the NPR2 receptor. Binds the clearance receptor NPR3. This Gallus gallus (Chicken) protein is C-type natriuretic peptide (NPPC).